Here is a 63-residue protein sequence, read N- to C-terminus: Ferredoxin (63 aa).

One can recognise a 4Fe-4S ferredoxin-type domain in the interval 2 to 29; the sequence is KVTVDQDLCIACGTCIDLCPSVFDWDDE. Positions 10, 13, 16, and 55 each coordinate [4Fe-4S] cluster.

It depends on [4Fe-4S] cluster as a cofactor.

Its function is as follows. Ferredoxins are iron-sulfur proteins that transfer electrons in a wide variety of metabolic reactions. The protein is Ferredoxin of Moorella thermoacetica (Clostridium thermoaceticum).